The sequence spans 33 residues: Pheromone biosynthesis-activating neuropeptide (33 aa).

A disordered region spans residues 1-33; that stretch reads LADDMPATMADQEVYRPEPEQIDSRNKYFSPRL. Residues 13–26 are compositionally biased toward basic and acidic residues; it reads EVYRPEPEQIDSRN. Leu33 is subject to Leucine amide.

Belongs to the pyrokinin family.

The protein localises to the secreted. Its function is as follows. Involved in the control of pheromone production in females. This Lymantria dispar (Gypsy moth) protein is Pheromone biosynthesis-activating neuropeptide.